The chain runs to 198 residues: MSLSIDVTSLPSISSSIFKNKSSSTASTLSGKSIGRNELYVSPDAEAFNKYMLSKSPEDIGPSDSASNDPLTSFSIRSHAVKTNADAGVSMDSSTQSRPSSNVGCDKVDFSFNKAMKVNANLDLSISISTDQKREKSKKDHKNKKCYPKIEAESDSDDYVLDDSDSDDGKCKNCKYKRKYFALRMRMKHVAMQLIEDL.

S67 is modified (phosphoserine; by host CK1). D92 provides a ligand contact to Mg(2+). Residues S154, S156, S164, and S166 each carry the phosphoserine; by host modification.

Belongs to the rotavirus NSP5 family. In terms of assembly, homodimer. Interacts with VP1. Interacts with VP2. Interacts with NSP2; this interaction leads to up-regulation of NSP5 hyperphosphorylation and formation of virus factories. Interacts with NSP6. Participates in the selective exclusion of host proteins from stress granules (SG) and P bodies (PB). Also participates in the sequestration of these remodeled organelles in viral factories. The cofactor is Mg(2+). Post-translationally, O-glycosylated. In terms of processing, hyperphosphorylated on serine residues, when in dimeric form. Phosphorylation by host CK1 is required for the hyperphosphorylation of NSP5 dimer.

It is found in the host cytoplasm. Its function is as follows. Plays an essential role in the viral genome replication. Participates, together with NSP2, in the formation of viral factories (viroplasms), which are large inclusions in the host cytoplasm where replication intermediates are assembled and viral RNA replication takes place. Orchestrates the recruitment of viroplasmic proteins such as capsid proteins to these factories. Participates in the selective exclusion of host proteins from stress granules (SG) and P bodies (PB). Also participates in the sequestration of these remodeled organelles in viral factories. The chain is Non-structural protein 5 from Oryctolagus cuniculus (Rabbit).